We begin with the raw amino-acid sequence, 994 residues long: E3 ubiquitin-protein ligase Arkadia (994 aa).

Residues Lys19, Lys28, Lys34, Lys47, Lys59, Lys73, Lys87, Lys96, and Lys110 each participate in a glycyl lysine isopeptide (Lys-Gly) (interchain with G-Cter in SUMO2) cross-link. The segment covering 66 to 89 (HLCDDSQKQEKEMNGNQQEQEKSL) has biased composition (basic and acidic residues). Residues 66–106 (HLCDDSQKQEKEMNGNQQEQEKSLVVRKKRKSQQAGPSYVQ) form a disordered region. The segment at 120–191 (QHLGTPSDED…HKWPRTETES (72 aa)) is disordered. Positions 132–151 (SSFSDCLSSPSSSLHFGDSD) are enriched in low complexity. The span at 164–173 (RHSQTILNAK) shows a compositional bias: polar residues. A Glycyl lysine isopeptide (Lys-Gly) (interchain with G-Cter in SUMO2) cross-link involves residue Lys173. A compositionally biased stretch (basic residues) spans 174 to 184 (SRSHSARSHKW). Residues Lys198 and Lys218 each participate in a glycyl lysine isopeptide (Lys-Gly) (interchain with G-Cter in SUMO2) cross-link. The interval 212-277 (CRKRFVKNNS…SSSTEGEEDL (66 aa)) is disordered. Over residues 234 to 247 (MQRKKREVLARRKY) the composition is skewed to basic residues. An interaction with AXIN1 region spans residues 241-404 (VLARRKYALL…VPTTSARMES (164 aa)). A compositionally biased stretch (low complexity) spans 252 to 271 (SSSSSSENDLSSESSSSSST). Positions 300–304 (VVVIE) match the SUMO interaction motif 1 (SIM) motif. Residues 325–331 (EVEIVTV) carry the SUMO interaction motif 2 (SIM) motif. The segment at 337–371 (SRSTLGHSRSHWSQGSSSHASRPQEPRNRSRISTV) is disordered. Residues 347–357 (HWSQGSSSHAS) are compositionally biased toward low complexity. Residues 382–386 (VVDLT) carry the SUMO interaction motif 3 (SIM) motif. 4 disordered regions span residues 388–476 (DEDE…AMPR), 508–537 (HGHH…DPAC), 610–684 (APSQ…VDYV), and 696–742 (ISSH…APPA). The span at 395–467 (VPTTSARMES…SRRTTSSAVT (73 aa)) shows a compositional bias: polar residues. The span at 508 to 522 (HGHHFQHHHHHHHTP) shows a compositional bias: basic residues. Residues 670–680 (NPPPQTQPPPQ) are compositionally biased toward pro residues. The tract at residues 907–909 (YPH) is ubiquitin binding. Glycyl lysine isopeptide (Lys-Gly) (interchain with G-Cter in SUMO2) cross-links involve residues Lys923 and Lys927. Zn(2+) is bound by residues Cys942 and Cys945. The segment at 942–983 (CTICLSILEEGEDVRRLPCMHLFHQVCVDQWLITNKKCPICR) adopts an RING-type; atypical zinc-finger fold. Residues 957-961 (RLPCM) form a ubiquitin binding region. Zn(2+)-binding residues include His965 and Cys968.

This sequence belongs to the Arkadia family. As to quaternary structure, monomer. Interacts with SMAD6, SMAD7, AXIN1, AXIN2 and SKIL isoform SNON. Interacts with (phosphorylated) SMAD2 and SMAD3. Part of a complex containing RNF111, AXIN1 and SMAD7. Interacts (via SIM domains) with SUMO1 and SUMO2. As to expression, broadly expressed.

The protein resides in the nucleus. It localises to the cytoplasm. It is found in the PML body. The catalysed reaction is S-ubiquitinyl-[E2 ubiquitin-conjugating enzyme]-L-cysteine + [acceptor protein]-L-lysine = [E2 ubiquitin-conjugating enzyme]-L-cysteine + N(6)-ubiquitinyl-[acceptor protein]-L-lysine.. It functions in the pathway protein modification; protein ubiquitination. Its activity is regulated as follows. Binds free ubiquitin non-covalently via its RING-type zinc finger. Ubiquitin-binding leads to enhance the E3 ubiquitin-protein ligase activity by stabilizing the ubiquitin-conjugating enzyme E2 (donor ubiquitin) in the 'closed' conformation and activating ubiquitin transfer. Functionally, E3 ubiquitin-protein ligase. Required for mesoderm patterning during embryonic development. Acts as an enhancer of the transcriptional responses of the SMAD2/SMAD3 effectors, which are activated downstream of BMP. Acts by mediating ubiquitination and degradation of SMAD inhibitors such as SMAD7, inducing their proteasomal degradation and thereby enhancing the transcriptional activity of TGF-beta and BMP. In addition to enhance transcription of SMAD2/SMAD3 effectors, also regulates their turnover by mediating their ubiquitination and subsequent degradation, coupling their activation with degradation, thereby ensuring that only effectors 'in use' are degraded. Activates SMAD3/SMAD4-dependent transcription by triggering signal-induced degradation of SNON isoform of SKIL. Associates with UBE2D2 as an E2 enzyme. Specifically binds polysumoylated chains via SUMO interaction motifs (SIMs) and mediates ubiquitination of sumoylated substrates. Catalyzes 'Lys-63'-linked ubiquitination of sumoylated XPC in response to UV irradiation, promoting nucleotide excision repair. Mediates ubiquitination and degradation of sumoylated PML. The regulation of the BMP-SMAD signaling is however independent of sumoylation and is not dependent of SUMO interaction motifs (SIMs). This chain is E3 ubiquitin-protein ligase Arkadia, found in Homo sapiens (Human).